The chain runs to 406 residues: Cytochrome bc1 complex Rieske iron-sulfur subunit (406 aa).

The next 3 membrane-spanning stretches (helical) occupy residues 56–76 (VGIW…VYLF), 98–118 (LLGL…IFYI), and 166–186 (MLGI…GGMV). Positions 291–388 (HGPRNAVMLI…ITVDEEGYLV (98 aa)) constitute a Rieske domain. The [2Fe-2S] cluster site is built by C331, H333, C350, and H353. Residues C336 and C352 are joined by a disulfide bond.

This sequence belongs to the Rieske iron-sulfur protein family. In terms of assembly, the cytochrome bc1 complex is composed of a cytochrome b (QcrB), the Rieske iron-sulfur protein (QcrA) and a diheme cytochrome c (QcrC) subunit. The bc1 complex forms a supercomplex with cytochrome c oxidase (cytochrome aa3). The cofactor is [2Fe-2S] cluster.

It is found in the cell membrane. Functionally, iron-sulfur subunit of the cytochrome bc1 complex, an essential component of the respiratory electron transport chain required for ATP synthesis. The bc1 complex catalyzes the oxidation of menaquinol and the reduction of cytochrome c in the respiratory chain. The bc1 complex operates through a Q-cycle mechanism that couples electron transfer to generation of the proton gradient that drives ATP synthesis. In Corynebacterium diphtheriae (strain ATCC 700971 / NCTC 13129 / Biotype gravis), this protein is Cytochrome bc1 complex Rieske iron-sulfur subunit (qcrA).